Reading from the N-terminus, the 469-residue chain is Mitochondrial adenyl nucleotide antiporter SLC25A25 (469 aa).

The interval 1-165 (MLCLCLYVPI…LYWKHSTIFD (165 aa)) is regulatory N-terminal domain. Topologically, residues 1–189 (MLCLCLYVPI…ERQTGMWWRH (189 aa)) are mitochondrial intermembrane. EF-hand domains are found at residues 47–80 (TYRQWKQKIVQAGDKDLDGQLDFEEFVHYLQDHE), 78–113 (DHEKKLRLVFKSLDKKNDGRIDAQEIMQSLRDLGVK), and 114–149 (ISEQQAEKILKSMDKNGTMTIDWNEWRDYHLLHPVE). Ca(2+)-binding residues include D60, D62, D64, Q66, and E71. The interval 151–160 (IPEIILYWKH) is linker region. The segment at 166 to 469 (VGENLTVPDE…LKITLGVQSR (304 aa)) is C-terminal transmembrane transporter domain. 3 Solcar repeats span residues 184–270 (GMWW…MKRL), 278–363 (LRIH…LKNT), and 375–463 (PGVF…LKIT). A helical membrane pass occupies residues 190 to 207 (LVAGGGAGAVSRTCTAPL). The Mitochondrial matrix segment spans residues 208–244 (DRLKVLMQVHASRSNNMCIVGGFTQMIREGGAKSLWR). A helical membrane pass occupies residues 245-264 (GNGINVLKIAPESAIKFMAY). Residues 265–287 (EQMKRLVGSDQETLRIHERLVAG) are Mitochondrial intermembrane-facing. Residues 288–301 (SLAGAIAQSSIYPM) traverse the membrane as a helical segment. Over 302-337 (EVLKTRMALRKTGQYSGMLDCARRILAKEGVAAFYK) the chain is Mitochondrial matrix. Residues 338 to 357 (GYIPNMLGIIPYAGIDLAVY) traverse the membrane as a helical segment. Residues 358–380 (ETLKNTWLQRYAVNSADPGVFVL) are Mitochondrial intermembrane-facing. The helical transmembrane segment at 381-398 (LACGTISSTCGQLASYPL) threads the bilayer. Topologically, residues 399–437 (ALVRTRMQAQASIEGAPEVTMSSLFKQILRTEGAFGLYR) are mitochondrial matrix. A helical transmembrane segment spans residues 438 to 457 (GLAPNFMKVIPAVSISYVVY). Topologically, residues 458–469 (ENLKITLGVQSR) are mitochondrial intermembrane.

It belongs to the mitochondrial carrier (TC 2.A.29) family.

It localises to the mitochondrion inner membrane. The enzyme catalyses Mg(2+)(out) + phosphate(in) + ATP(out) = Mg(2+)(in) + phosphate(out) + ATP(in). With respect to regulation, activated by an increase in cytosolic calcium levels that induce a conformational change of the N-terminal regulatory domain, uncapping the channel and allowing transport. Its function is as follows. Electroneutral antiporter that most probably mediates the transport of adenyl nucleotides through the inner mitochondrial membrane. Originally identified as an ATP-magnesium/inorganic phosphate antiporter, it could have a broader specificity for adenyl nucleotides. By regulating the mitochondrial matrix adenyl nucleotide pool could adapt to changing cellular energetic demands and indirectly regulate adenyl nucleotide-dependent metabolic pathways. The protein is Mitochondrial adenyl nucleotide antiporter SLC25A25 of Mus musculus (Mouse).